Consider the following 360-residue polypeptide: Ribosomal RNA large subunit methyltransferase M (360 aa).

S-adenosyl-L-methionine-binding positions include Ser190, 223–226 (CPGG), Asp242, Asp262, and Asp280. Catalysis depends on Lys309, which acts as the Proton acceptor.

Belongs to the class I-like SAM-binding methyltransferase superfamily. RNA methyltransferase RlmE family. RlmM subfamily. In terms of assembly, monomer.

It localises to the cytoplasm. It catalyses the reaction cytidine(2498) in 23S rRNA + S-adenosyl-L-methionine = 2'-O-methylcytidine(2498) in 23S rRNA + S-adenosyl-L-homocysteine + H(+). Its function is as follows. Catalyzes the 2'-O-methylation at nucleotide C2498 in 23S rRNA. In Haemophilus ducreyi (strain 35000HP / ATCC 700724), this protein is Ribosomal RNA large subunit methyltransferase M.